A 100-amino-acid polypeptide reads, in one-letter code: Small ribosomal subunit protein uS14c (100 aa).

It belongs to the universal ribosomal protein uS14 family. As to quaternary structure, part of the 30S ribosomal subunit.

Its subcellular location is the plastid. It localises to the chloroplast. Its function is as follows. Binds 16S rRNA, required for the assembly of 30S particles. The chain is Small ribosomal subunit protein uS14c from Ceratophyllum demersum (Rigid hornwort).